A 531-amino-acid polypeptide reads, in one-letter code: Arginine--tRNA ligase (531 aa).

Residues 113–123 (ANPTGPLHIGH) carry the 'HIGH' region motif.

Belongs to the class-I aminoacyl-tRNA synthetase family. In terms of assembly, monomer.

It localises to the cytoplasm. The catalysed reaction is tRNA(Arg) + L-arginine + ATP = L-arginyl-tRNA(Arg) + AMP + diphosphate. This chain is Arginine--tRNA ligase, found in Campylobacter lari (strain RM2100 / D67 / ATCC BAA-1060).